The following is a 351-amino-acid chain: MDEKDILRNLREEEEEEEENQSEETKILISSLPWEIDYLGNKLFKYQGYWYYEDVLQSIPNIHSSFQPQETDIVVASFYKSGTTWLKALTFALVQRSKHSLEDHHHPLLSHNPHEIVPYLELDLYLNSSKPDLTKFLSSSSSSSSPRLFSTHMSLDALKLPLKKSPCKVVYVCRNVKDVLVSLWCFLNANKGVEWGDFSQNEKIIRAENYSFKAIFESFCNGVTLHGPFWDHAQSYWRGSLEDPKHFLFMRYEELKAEPRTQVKRLAEFLDCPFTKEEEDSGTVDKILELCSLSNLSSLEINKTGSLGGVDYKTYFRKGQVGDWKSYMTSEMVNKIDMIVEEKLKGSGLKF.

Residues 1–11 (MDEKDILRNLR) show a composition bias toward basic and acidic residues. Residues 1 to 24 (MDEKDILRNLREEEEEEEENQSEE) are disordered. Residues 12-22 (EEEEEEEENQS) show a composition bias toward acidic residues. 3'-phosphoadenylyl sulfate is bound at residue 80–85 (KSGTTW). The active-site Proton acceptor is the His-152. 3'-phosphoadenylyl sulfate contacts are provided by residues Arg-174, Ser-182, Tyr-252, and 317–319 (RKG).

The protein belongs to the sulfotransferase 1 family. In terms of tissue distribution, expressed in roots and leaves.

Its subcellular location is the cytoplasm. Its function is as follows. Sulfotransferase that utilizes 3'-phospho-5'-adenylyl sulfate (PAPS) as sulfonate donor. No activity with brassinosteroids. The protein is Cytosolic sulfotransferase 9 (STO9) of Arabidopsis thaliana (Mouse-ear cress).